The sequence spans 294 residues: 4-hydroxy-tetrahydrodipicolinate synthase (294 aa).

Thr-47 contacts pyruvate. The active-site Proton donor/acceptor is the Tyr-135. The active-site Schiff-base intermediate with substrate is Lys-163. Thr-205 is a pyruvate binding site.

It belongs to the DapA family. Homotetramer; dimer of dimers.

Its subcellular location is the cytoplasm. The catalysed reaction is L-aspartate 4-semialdehyde + pyruvate = (2S,4S)-4-hydroxy-2,3,4,5-tetrahydrodipicolinate + H2O + H(+). It participates in amino-acid biosynthesis; L-lysine biosynthesis via DAP pathway; (S)-tetrahydrodipicolinate from L-aspartate: step 3/4. Its function is as follows. Catalyzes the condensation of (S)-aspartate-beta-semialdehyde [(S)-ASA] and pyruvate to 4-hydroxy-tetrahydrodipicolinate (HTPA). The sequence is that of 4-hydroxy-tetrahydrodipicolinate synthase from Rickettsia conorii (strain ATCC VR-613 / Malish 7).